A 255-amino-acid polypeptide reads, in one-letter code: 5'-nucleotidase SurE (255 aa).

A divalent metal cation contacts are provided by Asp-8, Asp-9, Ser-40, and Asn-93.

The protein belongs to the SurE nucleotidase family. A divalent metal cation is required as a cofactor.

The protein resides in the cytoplasm. It carries out the reaction a ribonucleoside 5'-phosphate + H2O = a ribonucleoside + phosphate. Nucleotidase that shows phosphatase activity on nucleoside 5'-monophosphates. The sequence is that of 5'-nucleotidase SurE from Nitrobacter winogradskyi (strain ATCC 25391 / DSM 10237 / CIP 104748 / NCIMB 11846 / Nb-255).